The chain runs to 375 residues: tRNA-specific 2-thiouridylase MnmA (375 aa).

ATP-binding positions include 16–23 (GMSGGVDS) and M42. The segment at 102-104 (NPD) is interaction with target base in tRNA. C107 (nucleophile) is an active-site residue. C107 and C203 are disulfide-bonded. G131 is a binding site for ATP. The interval 153 to 155 (KDQ) is interaction with tRNA. C203 serves as the catalytic Cysteine persulfide intermediate. The segment at 315 to 316 (RY) is interaction with tRNA.

The protein belongs to the MnmA/TRMU family.

It localises to the cytoplasm. The catalysed reaction is S-sulfanyl-L-cysteinyl-[protein] + uridine(34) in tRNA + AH2 + ATP = 2-thiouridine(34) in tRNA + L-cysteinyl-[protein] + A + AMP + diphosphate + H(+). In terms of biological role, catalyzes the 2-thiolation of uridine at the wobble position (U34) of tRNA, leading to the formation of s(2)U34. The polypeptide is tRNA-specific 2-thiouridylase MnmA (Pseudomonas aeruginosa (strain UCBPP-PA14)).